The primary structure comprises 435 residues: Chaperone SurA (435 aa).

The N-terminal stretch at 1-29 (MINKTLHTKHTLLGLLAMAVLMIPVWSQA) is a signal peptide. PpiC domains follow at residues 180 to 281 (QEDF…KMID) and 290 to 390 (VTQY…RVDD).

It is found in the periplasm. The enzyme catalyses [protein]-peptidylproline (omega=180) = [protein]-peptidylproline (omega=0). Chaperone involved in the correct folding and assembly of outer membrane proteins. Recognizes specific patterns of aromatic residues and the orientation of their side chains, which are found more frequently in integral outer membrane proteins. May act in both early periplasmic and late outer membrane-associated steps of protein maturation. The sequence is that of Chaperone SurA from Alcanivorax borkumensis (strain ATCC 700651 / DSM 11573 / NCIMB 13689 / SK2).